Here is a 226-residue protein sequence, read N- to C-terminus: Leucyl/phenylalanyl-tRNA--protein transferase (226 aa).

This sequence belongs to the L/F-transferase family.

The protein localises to the cytoplasm. It catalyses the reaction N-terminal L-lysyl-[protein] + L-leucyl-tRNA(Leu) = N-terminal L-leucyl-L-lysyl-[protein] + tRNA(Leu) + H(+). The enzyme catalyses N-terminal L-arginyl-[protein] + L-leucyl-tRNA(Leu) = N-terminal L-leucyl-L-arginyl-[protein] + tRNA(Leu) + H(+). The catalysed reaction is L-phenylalanyl-tRNA(Phe) + an N-terminal L-alpha-aminoacyl-[protein] = an N-terminal L-phenylalanyl-L-alpha-aminoacyl-[protein] + tRNA(Phe). Its function is as follows. Functions in the N-end rule pathway of protein degradation where it conjugates Leu, Phe and, less efficiently, Met from aminoacyl-tRNAs to the N-termini of proteins containing an N-terminal arginine or lysine. In Pseudomonas fluorescens (strain ATCC BAA-477 / NRRL B-23932 / Pf-5), this protein is Leucyl/phenylalanyl-tRNA--protein transferase.